A 398-amino-acid chain; its full sequence is Elongation factor Tu (398 aa).

Residues 10-207 form the tr-type G domain; it reads KPHVNIGTIG…TVDSYIPEPE (198 aa). Positions 19–26 are G1; the sequence is GHVDHGKT. Residue 19-26 coordinates GTP; sequence GHVDHGKT. A Mg(2+)-binding site is contributed by T26. The segment at 63–67 is G2; that stretch reads GITIN. The tract at residues 84–87 is G3; the sequence is DAPG. GTP is bound by residues 84 to 88 and 139 to 142; these read DAPGH and NKVD. The tract at residues 139–142 is G4; sequence NKVD. The G5 stretch occupies residues 177 to 179; the sequence is SAL.

The protein belongs to the TRAFAC class translation factor GTPase superfamily. Classic translation factor GTPase family. EF-Tu/EF-1A subfamily. Monomer.

The protein resides in the cytoplasm. The catalysed reaction is GTP + H2O = GDP + phosphate + H(+). In terms of biological role, GTP hydrolase that promotes the GTP-dependent binding of aminoacyl-tRNA to the A-site of ribosomes during protein biosynthesis. This is Elongation factor Tu from Streptococcus pyogenes serotype M1.